Reading from the N-terminus, the 216-residue chain is Protein Syd (216 aa).

It belongs to the Syd family.

It localises to the cell inner membrane. Interacts with the SecY protein in vivo. May bind preferentially to an uncomplexed state of SecY, thus functioning either as a chelating agent for excess SecY in the cell or as a regulatory factor that negatively controls the translocase function. This Shewanella frigidimarina (strain NCIMB 400) protein is Protein Syd.